Reading from the N-terminus, the 156-residue chain is Small ribosomal subunit protein uS7 (156 aa).

This sequence belongs to the universal ribosomal protein uS7 family. Part of the 30S ribosomal subunit. Contacts proteins S9 and S11.

One of the primary rRNA binding proteins, it binds directly to 16S rRNA where it nucleates assembly of the head domain of the 30S subunit. Is located at the subunit interface close to the decoding center, probably blocks exit of the E-site tRNA. This chain is Small ribosomal subunit protein uS7, found in Pasteurella multocida (strain Pm70).